Reading from the N-terminus, the 272-residue chain is Hydroxyethylthiazole kinase (272 aa).

Met45 contributes to the substrate binding site. Residues Arg121 and Thr168 each contribute to the ATP site. A substrate-binding site is contributed by Gly195.

The protein belongs to the Thz kinase family. Homotrimer. The cofactor is Mg(2+).

It carries out the reaction 5-(2-hydroxyethyl)-4-methylthiazole + ATP = 4-methyl-5-(2-phosphooxyethyl)-thiazole + ADP + H(+). It participates in cofactor biosynthesis; thiamine diphosphate biosynthesis; 4-methyl-5-(2-phosphoethyl)-thiazole from 5-(2-hydroxyethyl)-4-methylthiazole: step 1/1. Functionally, catalyzes the phosphorylation of the hydroxyl group of 4-methyl-5-beta-hydroxyethylthiazole (THZ). This Bacillus subtilis (strain 168) protein is Hydroxyethylthiazole kinase.